We begin with the raw amino-acid sequence, 390 residues long: Zinc transporter 8 (390 aa).

The N-terminal stretch at 1-25 is a signal peptide; the sequence is MRTNTTATVLLAAAVALLLATAARG. An N-linked (GlcNAc...) asparagine glycan is attached at Asn4. Over 26-50 the chain is Extracellular; that stretch reads DGGDGGCGKEDAAAGRDRARARGLK. A helical transmembrane segment spans residues 51-71; sequence IAAFFSILVCGALGCGLPSLG. At 72–82 the chain is on the cytoplasmic side; it reads RHVPALRPDGD. A helical membrane pass occupies residues 83–103; it reads VFFLVKAFAAGVILATGFIHI. Topologically, residues 104-124 are extracellular; that stretch reads LPDAFDNLTDDCLPAGGPWKE. N-linked (GlcNAc...) asparagine glycosylation occurs at Asn110. The helical transmembrane segment at 125–145 threads the bilayer; that stretch reads FPFAGFGAMVGAIGTLVVDTL. Residues 146–235 lie on the Cytoplasmic side of the membrane; it reads ATGYFTRALS…DDKETTLRHR (90 aa). Residues 165 to 199 are disordered; the sequence is VADEEKQSAAATQQHNHHHNHHVVGDGGGGGEEHE. Residues 236–256 traverse the membrane as a helical segment; that stretch reads VISQVLELGIVVHSVIIGISL. The Extracellular segment spans residues 257-267; that stretch reads GASQNPETIKP. Residues 268–288 form a helical membrane-spanning segment; that stretch reads LVVALSFHQMFEGMGLGGCIV. Residues 289–296 are Cytoplasmic-facing; that stretch reads QAKFKVRS. The chain crosses the membrane as a helical span at residues 297-317; sequence IVTMVLFFCLTTPVGIAVGVG. At 318–329 the chain is on the extracellular side; it reads ISSVYNESSPTA. N-linked (GlcNAc...) asparagine glycosylation is present at Asn323. A helical membrane pass occupies residues 330-350; the sequence is LVVEGILNSVAAGILIYMALV. At 351–369 the chain is on the cytoplasmic side; it reads DLLAEDFMNPRVQSKGKLQ. A helical membrane pass occupies residues 370–390; sequence LGINLAMLAGAGLMSMLAKWA.

This sequence belongs to the ZIP transporter (TC 2.A.5) family.

The protein resides in the cell membrane. In terms of biological role, zinc transporter that may mediate zinc uptake from the rhizosphere and may be responsible for the translocation of zinc within the plant. In Oryza sativa subsp. japonica (Rice), this protein is Zinc transporter 8 (ZIP8).